Reading from the N-terminus, the 518-residue chain is Glutamate--cysteine ligase (518 aa).

Belongs to the glutamate--cysteine ligase type 1 family. Type 1 subfamily.

The catalysed reaction is L-cysteine + L-glutamate + ATP = gamma-L-glutamyl-L-cysteine + ADP + phosphate + H(+). It participates in sulfur metabolism; glutathione biosynthesis; glutathione from L-cysteine and L-glutamate: step 1/2. This is Glutamate--cysteine ligase from Shigella dysenteriae serotype 1 (strain Sd197).